A 465-amino-acid polypeptide reads, in one-letter code: tRNA-2-methylthio-N(6)-dimethylallyladenosine synthase (465 aa).

The region spanning 18–136 (RKLYIETYGC…LPNLVGAAEQ (119 aa)) is the MTTase N-terminal domain. Positions 27, 63, 100, 174, 178, and 181 each coordinate [4Fe-4S] cluster. In terms of domain architecture, Radical SAM core spans 160–392 (GGVHINGFVS…IALQNRLSEE (233 aa)). A TRAM domain is found at 395–458 (KRDISKTFEV…SATLFGEVVE (64 aa)).

This sequence belongs to the methylthiotransferase family. MiaB subfamily. Monomer. [4Fe-4S] cluster serves as cofactor.

It localises to the cytoplasm. It catalyses the reaction N(6)-dimethylallyladenosine(37) in tRNA + (sulfur carrier)-SH + AH2 + 2 S-adenosyl-L-methionine = 2-methylsulfanyl-N(6)-dimethylallyladenosine(37) in tRNA + (sulfur carrier)-H + 5'-deoxyadenosine + L-methionine + A + S-adenosyl-L-homocysteine + 2 H(+). Its function is as follows. Catalyzes the methylthiolation of N6-(dimethylallyl)adenosine (i(6)A), leading to the formation of 2-methylthio-N6-(dimethylallyl)adenosine (ms(2)i(6)A) at position 37 in tRNAs that read codons beginning with uridine. The chain is tRNA-2-methylthio-N(6)-dimethylallyladenosine synthase from Porphyromonas gingivalis (strain ATCC 33277 / DSM 20709 / CIP 103683 / JCM 12257 / NCTC 11834 / 2561).